Consider the following 535-residue polypeptide: Dual specificity calcium/calmodulin-dependent 3',5'-cyclic nucleotide phosphodiesterase 1B (535 aa).

Positions 1–21 (MELSPRSPPEMLESDCPSPLE) are disordered. Phosphoserine occurs at positions 7 and 14. Calmodulin-binding stretches follow at residues 27–47 (SKKMWIKLRSLLRYMVKQLEN) and 117–140 (EKPKFRSIVHAVQAGIFVERMFRR). The PDEase domain maps to 145-502 (VGPTYSTAVH…QKWKERAASG (358 aa)). The active-site Proton donor is H222. The Zn(2+) site is built by H226, H262, D263, and D369. Residue D263 coordinates Mg(2+). Disordered stretches follow at residues 444 to 474 (QPLADDDSKPKSQPSFQWRQPSLDVDVGDPN) and 495 to 535 (WKER…GNLD). The segment covering 454–463 (KSQPSFQWRQ) has biased composition (polar residues). 2 positions are modified to phosphoserine: S465 and S513.

This sequence belongs to the cyclic nucleotide phosphodiesterase family. PDE1 subfamily. In terms of assembly, homodimer. The cofactor is Zn(2+). Requires Mg(2+) as cofactor.

The protein localises to the cytoplasm. Its subcellular location is the cytosol. The catalysed reaction is a nucleoside 3',5'-cyclic phosphate + H2O = a nucleoside 5'-phosphate + H(+). It carries out the reaction 3',5'-cyclic GMP + H2O = GMP + H(+). It catalyses the reaction 3',5'-cyclic AMP + H2O = AMP + H(+). Type I PDE are activated by the binding of calmodulin in the presence of Ca(2+). Cyclic nucleotide phosphodiesterase with a dual specificity for the second messengers cAMP and cGMP, which are key regulators of many important physiological processes. Has a preference for cGMP as a substrate. In Mus musculus (Mouse), this protein is Dual specificity calcium/calmodulin-dependent 3',5'-cyclic nucleotide phosphodiesterase 1B.